The primary structure comprises 355 residues: Protein-glutamate methylesterase/protein-glutamine glutaminase 3 (355 aa).

A Response regulatory domain is found at 5 to 122; that stretch reads KVLIVDDSAV…KQFLEESRVR (118 aa). Asp56 carries the post-translational modification 4-aspartylphosphate. The 191-residue stretch at 165-355 folds into the CheB-type methylesterase domain; that stretch reads IQTTEKVVVV…IAREVLRLCG (191 aa). Active-site residues include Ser177, His203, and Asp299.

The protein belongs to the CheB family. Phosphorylated by CheA. Phosphorylation of the N-terminal regulatory domain activates the methylesterase activity.

It localises to the cytoplasm. It catalyses the reaction [protein]-L-glutamate 5-O-methyl ester + H2O = L-glutamyl-[protein] + methanol + H(+). The catalysed reaction is L-glutaminyl-[protein] + H2O = L-glutamyl-[protein] + NH4(+). Functionally, involved in chemotaxis. Part of a chemotaxis signal transduction system that modulates chemotaxis in response to various stimuli. Catalyzes the demethylation of specific methylglutamate residues introduced into the chemoreceptors (methyl-accepting chemotaxis proteins or MCP) by CheR. Also mediates the irreversible deamidation of specific glutamine residues to glutamic acid. The sequence is that of Protein-glutamate methylesterase/protein-glutamine glutaminase 3 from Geobacter metallireducens (strain ATCC 53774 / DSM 7210 / GS-15).